The sequence spans 440 residues: 3-phosphoshikimate 1-carboxyvinyltransferase (440 aa).

3-phosphoshikimate-binding residues include Lys19, Ser20, and Arg24. Residue Lys19 participates in phosphoenolpyruvate binding. Residues Gly92 and Arg121 each coordinate phosphoenolpyruvate. 4 residues coordinate 3-phosphoshikimate: Ser166, Gln168, Asp315, and Lys342. Position 168 (Gln168) interacts with phosphoenolpyruvate. Asp315 (proton acceptor) is an active-site residue. Residues Arg346 and Arg399 each contribute to the phosphoenolpyruvate site.

This sequence belongs to the EPSP synthase family. In terms of assembly, monomer.

It is found in the cytoplasm. It carries out the reaction 3-phosphoshikimate + phosphoenolpyruvate = 5-O-(1-carboxyvinyl)-3-phosphoshikimate + phosphate. The protein operates within metabolic intermediate biosynthesis; chorismate biosynthesis; chorismate from D-erythrose 4-phosphate and phosphoenolpyruvate: step 6/7. Catalyzes the transfer of the enolpyruvyl moiety of phosphoenolpyruvate (PEP) to the 5-hydroxyl of shikimate-3-phosphate (S3P) to produce enolpyruvyl shikimate-3-phosphate and inorganic phosphate. In Leptospira borgpetersenii serovar Hardjo-bovis (strain JB197), this protein is 3-phosphoshikimate 1-carboxyvinyltransferase.